The primary structure comprises 194 residues: MYIMKQSGWLELICGSMFSGKSEELIRRIKRATFAKQEVKVFKPAIDNRYSSESVVSHNGTSIVCHAIASPEEIFQYISKETDVIGVDEVQFFDETIVGTLTSLADQGYRVIAAGLDLDFRGEPFGVVPDLMALAETVTKLQAVCSVCGSPASRTQRLINGKPASYDDPVILVGASEAYEARCRHHHEVPGNPK.

ATP is bound by residues 15 to 22 (GSMFSGKS) and 88 to 91 (DEVQ). Glu89 (proton acceptor) is an active-site residue. Residues Cys145, Cys148, Cys183, and His186 each coordinate Zn(2+).

It belongs to the thymidine kinase family. Homotetramer.

It is found in the cytoplasm. It carries out the reaction thymidine + ATP = dTMP + ADP + H(+). This chain is Thymidine kinase, found in Bacillus licheniformis (strain ATCC 14580 / DSM 13 / JCM 2505 / CCUG 7422 / NBRC 12200 / NCIMB 9375 / NCTC 10341 / NRRL NRS-1264 / Gibson 46).